The primary structure comprises 208 residues: Transmembrane emp24 domain-containing protein p24beta2 (208 aa).

The first 21 residues, 1–21 (MSLKGTIVLLGLLWSFQATLG), serve as a signal peptide directing secretion. Topologically, residues 22 to 176 (IRFVIDREEC…ENMSKRAVHK (155 aa)) are lumenal. In terms of domain architecture, GOLD spans 29–116 (EECFSHKAEY…HETIDFDVQL (88 aa)). Positions 134-149 (LMEQISKLEEALYNIQ) form a coiled coil. N168 carries an N-linked (GlcNAc...) asparagine glycan. The chain crosses the membrane as a helical span at residues 177-195 (ALFESFALIGASFLQVYLL). Over 196–208 (RRLFERKLGMSRV) the chain is Cytoplasmic. The COPII vesicle coat-binding motif lies at 198 to 199 (LF). Residues 198–208 (LFERKLGMSRV) carry the COPI vesicle coat-binding motif. The short motif at 207–208 (RV) is the Required for the export from the endoplasmic reticulum to the Golgi element.

This sequence belongs to the EMP24/GP25L family. Probably oligomerizes with other members of the EMP24/GP25L family. Associates with the COPI vesicle coat (coatomer). Associates with the COPII vesicle coat (coatomer). Interacts with p24delta5.

The protein resides in the golgi apparatus. The protein localises to the cis-Golgi network membrane. It is found in the golgi stack membrane. Involved in vesicular protein trafficking. Mainly functions in the early secretory pathway but also in post-Golgi membranes. Thought to act as cargo receptor at the lumenal side for incorporation of secretory cargo molecules into transport vesicles and to be involved in vesicle coat formation at the cytoplasmic side. Interacts with p24delta5 at endoplasmic reticulum export sites for endoplasmic reticulum exit and coupled transport to the Golgi apparatus. This chain is Transmembrane emp24 domain-containing protein p24beta2, found in Arabidopsis thaliana (Mouse-ear cress).